Here is a 262-residue protein sequence, read N- to C-terminus: Thiazole synthase (262 aa).

Lys96 (schiff-base intermediate with DXP) is an active-site residue. 1-deoxy-D-xylulose 5-phosphate contacts are provided by residues Gly157, 184–185 (AG), and 206–207 (NT).

This sequence belongs to the ThiG family. Homotetramer. Forms heterodimers with either ThiH or ThiS.

The protein resides in the cytoplasm. The enzyme catalyses [ThiS sulfur-carrier protein]-C-terminal-Gly-aminoethanethioate + 2-iminoacetate + 1-deoxy-D-xylulose 5-phosphate = [ThiS sulfur-carrier protein]-C-terminal Gly-Gly + 2-[(2R,5Z)-2-carboxy-4-methylthiazol-5(2H)-ylidene]ethyl phosphate + 2 H2O + H(+). Its pathway is cofactor biosynthesis; thiamine diphosphate biosynthesis. Functionally, catalyzes the rearrangement of 1-deoxy-D-xylulose 5-phosphate (DXP) to produce the thiazole phosphate moiety of thiamine. Sulfur is provided by the thiocarboxylate moiety of the carrier protein ThiS. In vitro, sulfur can be provided by H(2)S. In Legionella pneumophila (strain Paris), this protein is Thiazole synthase.